We begin with the raw amino-acid sequence, 686 residues long: Leucine-rich repeat-containing protein 49 (686 aa).

7 LRR repeats span residues 113–134 (HLRL…SNLQ), 135–156 (RLIF…STLK), 157–178 (SLRV…ENLK), 179–200 (NLDV…NHLC), 201–222 (DLRV…NGLD), 223–244 (SLTE…DNLP), and 245–266 (CLQR…SCLA). Residues 279–317 (NPIAQESWYKHTVLQNMMQLRQLDMKRITEEERRVASVV) form the LRRCT domain. 2 disordered regions span residues 311–332 (RRVA…HKQS) and 359–381 (ASTQ…DGGN). A coiled-coil region spans residues 319–341 (KKEEEKKRESHKQSLLKEKKRLT).

In terms of assembly, part of the neuronal tubulin polyglutamylase complex which contains TPGS1, TPGS2, TTLL1, LRRC49 and NICN1. Interacts with PCM1; TTLL1, TPGS1, TPGS2 and LRRC49.

It localises to the cytoplasm. It is found in the cytoskeleton. The protein localises to the microtubule organizing center. The protein resides in the centrosome. Its subcellular location is the centriolar satellite. Functionally, subunit of the tubulin polyglutamylase complex (TPGC). The complex mediates cilia and flagella polyglutamylation which is essential for their biogenesis and motility. This chain is Leucine-rich repeat-containing protein 49 (Lrrc49), found in Mus musculus (Mouse).